A 128-amino-acid polypeptide reads, in one-letter code: Kinase-associated lipoprotein B (128 aa).

A signal peptide spans 1-25 (MSTFETGSIVKGFYKTGVYIGEITA). The N-palmitoyl cysteine moiety is linked to residue Cys-26. Cys-26 is lipidated: S-diacylglycerol cysteine.

It localises to the cell membrane. May play a role in the activation or the expression of KinB. The sequence is that of Kinase-associated lipoprotein B (kapB) from Bacillus subtilis (strain 168).